The primary structure comprises 504 residues: ATP synthase subunit alpha (504 aa).

169 to 176 is a binding site for ATP; sequence GDRKTGKT.

It belongs to the ATPase alpha/beta chains family. F-type ATPases have 2 components, CF(1) - the catalytic core - and CF(0) - the membrane proton channel. CF(1) has five subunits: alpha(3), beta(3), gamma(1), delta(1), epsilon(1). CF(0) has three main subunits: a(1), b(2) and c(9-12). The alpha and beta chains form an alternating ring which encloses part of the gamma chain. CF(1) is attached to CF(0) by a central stalk formed by the gamma and epsilon chains, while a peripheral stalk is formed by the delta and b chains.

Its subcellular location is the cell membrane. The enzyme catalyses ATP + H2O + 4 H(+)(in) = ADP + phosphate + 5 H(+)(out). In terms of biological role, produces ATP from ADP in the presence of a proton gradient across the membrane. The alpha chain is a regulatory subunit. The polypeptide is ATP synthase subunit alpha (Leuconostoc citreum (strain KM20)).